Reading from the N-terminus, the 148-residue chain is Large ribosomal subunit protein bL9 (148 aa).

It belongs to the bacterial ribosomal protein bL9 family.

Binds to the 23S rRNA. The protein is Large ribosomal subunit protein bL9 of Hydrogenobaculum sp. (strain Y04AAS1).